The primary structure comprises 396 residues: Elongation factor Tu (396 aa).

The region spanning 10–206 (KLHVNVGTIG…ALDTHIPNPE (197 aa)) is the tr-type G domain. Residues 19–26 (GHVDHGKT) are G1. A GTP-binding site is contributed by 19 to 26 (GHVDHGKT). Threonine 26 contacts Mg(2+). The interval 60–64 (GITIS) is G2. Residues 81-84 (DCPG) are G3. GTP is bound by residues 81–85 (DCPGH) and 136–139 (NKAD). The interval 136–139 (NKAD) is G4. The interval 174-176 (SAL) is G5.

This sequence belongs to the TRAFAC class translation factor GTPase superfamily. Classic translation factor GTPase family. EF-Tu/EF-1A subfamily. As to quaternary structure, monomer.

The protein localises to the cytoplasm. It carries out the reaction GTP + H2O = GDP + phosphate + H(+). In terms of biological role, GTP hydrolase that promotes the GTP-dependent binding of aminoacyl-tRNA to the A-site of ribosomes during protein biosynthesis. The sequence is that of Elongation factor Tu from Xylella fastidiosa (strain 9a5c).